The sequence spans 308 residues: Glutaminase (308 aa).

7 residues coordinate substrate: Ser66, Asn117, Glu161, Asn168, Tyr192, Tyr244, and Val262.

Belongs to the glutaminase family. In terms of assembly, homotetramer.

It carries out the reaction L-glutamine + H2O = L-glutamate + NH4(+). This Salmonella dublin (strain CT_02021853) protein is Glutaminase.